Consider the following 248-residue polypeptide: Inner membrane protein pE248R (248 aa).

Residue Gly-2 is the site of N-myristoyl glycine; by host attachment. Topologically, residues 2 to 199 (GGSTSKNSFK…ADAISAVFKN (198 aa)) are cytoplasmic. A helical transmembrane segment spans residues 200-220 (IMVAAVVIVLIIVGFIAVFYF). Residues 221–248 (LHSRHRHEEEEEAEPLISNKVLKNAAVS) are Extracellular-facing.

Belongs to the asfivirus E248R family. As to quaternary structure, interacts with A151R.

Its subcellular location is the host membrane. It is found in the virion membrane. Its function is as follows. Essential for viral fusion with host endosomal membrane and core release. In African swine fever virus (strain Badajoz 1971 Vero-adapted) (Ba71V), this protein is Inner membrane protein pE248R.